A 488-amino-acid polypeptide reads, in one-letter code: V-type proton ATPase subunit B 1 (488 aa).

The protein belongs to the ATPase alpha/beta chains family. In terms of assembly, V-ATPase is a heteromultimeric enzyme composed of a peripheral catalytic V1 complex (main components: subunits A, B, C, D, E, and F) attached to an integral membrane V0 proton pore complex (main component: the proteolipid protein).

Its function is as follows. Non-catalytic subunit of the peripheral V1 complex of vacuolar ATPase. V-ATPase is responsible for acidifying a variety of intracellular compartments in eukaryotic cells. The sequence is that of V-type proton ATPase subunit B 1 from Hordeum vulgare (Barley).